Consider the following 223-residue polypeptide: Probable glutathione S-transferase (223 aa).

The 80-residue stretch at 2–81 folds into the GST N-terminal domain; the sequence is AEVKLLGFWY…YIDETFEGPS (80 aa). Glutathione is bound by residues S12, K39, V53, and 65-66; that span reads ES. The GST C-terminal domain maps to 86–212; it reads DPYDRALARF…ELLAFFRARF (127 aa).

It belongs to the GST superfamily. HSP26 family. As to expression, root tip-specific expression.

It catalyses the reaction RX + glutathione = an S-substituted glutathione + a halide anion + H(+). The polypeptide is Probable glutathione S-transferase (Nicotiana tabacum (Common tobacco)).